Here is a 479-residue protein sequence, read N- to C-terminus: Glycogen synthase (479 aa).

Residue Lys15 coordinates ADP-alpha-D-glucose.

Belongs to the glycosyltransferase 1 family. Bacterial/plant glycogen synthase subfamily.

The catalysed reaction is [(1-&gt;4)-alpha-D-glucosyl](n) + ADP-alpha-D-glucose = [(1-&gt;4)-alpha-D-glucosyl](n+1) + ADP + H(+). The protein operates within glycan biosynthesis; glycogen biosynthesis. Synthesizes alpha-1,4-glucan chains using ADP-glucose. The chain is Glycogen synthase from Clostridium beijerinckii (strain ATCC 51743 / NCIMB 8052) (Clostridium acetobutylicum).